We begin with the raw amino-acid sequence, 421 residues long: Zinc metalloproteinase-disintegrin-like lachestatin-1 (421 aa).

Residues 10-206 (KYVKLVLVAD…DMPQCILEKP (197 aa)) enclose the Peptidase M12B domain. 3 cysteine pairs are disulfide-bonded: cysteine 121/cysteine 201, cysteine 161/cysteine 185, and cysteine 163/cysteine 168. Residue histidine 146 participates in Zn(2+) binding. Glutamate 147 is an active-site residue. 2 residues coordinate Zn(2+): histidine 150 and histidine 156. The Disintegrin domain occupies 214 to 299 (PPVCGNYFVE…AECTDRFQRN (86 aa)). Positions 216, 219, 221, 223, 226, and 229 each coordinate Ca(2+). Cystine bridges form between cysteine 217–cysteine 246, cysteine 228–cysteine 241, cysteine 230–cysteine 236, cysteine 240–cysteine 263, cysteine 254–cysteine 260, cysteine 259–cysteine 285, cysteine 272–cysteine 292, cysteine 279–cysteine 310, cysteine 303–cysteine 315, cysteine 322–cysteine 372, cysteine 337–cysteine 383, cysteine 350–cysteine 360, cysteine 367–cysteine 409, and cysteine 403–cysteine 414. The short motif at 278–280 (ECD) is the D/ECD-tripeptide element. Ca(2+) contacts are provided by aspartate 280, methionine 281, aspartate 283, aspartate 294, and arginine 295. A glycan (N-linked (GlcNAc...) asparagine) is linked at asparagine 312.

Belongs to the venom metalloproteinase (M12B) family. P-III subfamily. P-IIIc sub-subfamily. As to quaternary structure, homodimer; disulfide-linked. Zn(2+) is required as a cofactor. Expressed by the venom gland.

It localises to the secreted. In terms of biological role, snake venom zinc metalloprotease that induces apoptosis in vascular endothelial cells (VEC), without degrading the extracellular matrix (it cannot cleave collagen) or inhibiting adhesion of VEC. Has also fibrinogenolytic and hemorrhagic activities. The polypeptide is Zinc metalloproteinase-disintegrin-like lachestatin-1 (Lachesis muta rhombeata (Bushmaster)).